We begin with the raw amino-acid sequence, 145 residues long: D-aminoacyl-tRNA deacylase (145 aa).

The Gly-cisPro motif, important for rejection of L-amino acids signature appears at 137–138 (GP).

The protein belongs to the DTD family. As to quaternary structure, homodimer.

Its subcellular location is the cytoplasm. It carries out the reaction glycyl-tRNA(Ala) + H2O = tRNA(Ala) + glycine + H(+). The catalysed reaction is a D-aminoacyl-tRNA + H2O = a tRNA + a D-alpha-amino acid + H(+). Functionally, an aminoacyl-tRNA editing enzyme that deacylates mischarged D-aminoacyl-tRNAs. Also deacylates mischarged glycyl-tRNA(Ala), protecting cells against glycine mischarging by AlaRS. Acts via tRNA-based rather than protein-based catalysis; rejects L-amino acids rather than detecting D-amino acids in the active site. By recycling D-aminoacyl-tRNA to D-amino acids and free tRNA molecules, this enzyme counteracts the toxicity associated with the formation of D-aminoacyl-tRNA entities in vivo and helps enforce protein L-homochirality. In Pectobacterium atrosepticum (strain SCRI 1043 / ATCC BAA-672) (Erwinia carotovora subsp. atroseptica), this protein is D-aminoacyl-tRNA deacylase.